The chain runs to 320 residues: o-succinylbenzoate synthase (320 aa).

Residue K133 is the Proton donor of the active site. 3 residues coordinate Mg(2+): D161, E190, and D213. Catalysis depends on K235, which acts as the Proton acceptor.

It belongs to the mandelate racemase/muconate lactonizing enzyme family. MenC type 1 subfamily. The cofactor is a divalent metal cation.

The enzyme catalyses (1R,6R)-6-hydroxy-2-succinyl-cyclohexa-2,4-diene-1-carboxylate = 2-succinylbenzoate + H2O. It functions in the pathway quinol/quinone metabolism; 1,4-dihydroxy-2-naphthoate biosynthesis; 1,4-dihydroxy-2-naphthoate from chorismate: step 4/7. The protein operates within quinol/quinone metabolism; menaquinone biosynthesis. In terms of biological role, converts 2-succinyl-6-hydroxy-2,4-cyclohexadiene-1-carboxylate (SHCHC) to 2-succinylbenzoate (OSB). This is o-succinylbenzoate synthase from Citrobacter koseri (strain ATCC BAA-895 / CDC 4225-83 / SGSC4696).